The chain runs to 546 residues: Chaperonin GroEL (546 aa).

Residues 29 to 32 (TLGP), K50, 86 to 90 (DGTTT), G415, and D495 each bind ATP. Residues 526–546 (EDNAGGGGMPQGMGGGMPGMM) are disordered. Gly residues predominate over residues 529–546 (AGGGGMPQGMGGGMPGMM).

It belongs to the chaperonin (HSP60) family. In terms of assembly, forms a cylinder of 14 subunits composed of two heptameric rings stacked back-to-back. Interacts with the co-chaperonin GroES.

Its subcellular location is the cytoplasm. The enzyme catalyses ATP + H2O + a folded polypeptide = ADP + phosphate + an unfolded polypeptide.. Functionally, together with its co-chaperonin GroES, plays an essential role in assisting protein folding. The GroEL-GroES system forms a nano-cage that allows encapsulation of the non-native substrate proteins and provides a physical environment optimized to promote and accelerate protein folding. The polypeptide is Chaperonin GroEL (Christiangramia forsetii (strain DSM 17595 / CGMCC 1.15422 / KT0803) (Gramella forsetii)).